The primary structure comprises 306 residues: Homeobox protein Hox-C13a (306 aa).

The tract at residues Ser68–Ser90 is disordered. Positions Gly236 to Ile295 form a DNA-binding region, homeobox.

The protein belongs to the Abd-B homeobox family.

It is found in the nucleus. In terms of biological role, sequence-specific transcription factor which is part of a developmental regulatory system that provides cells with specific positional identities on the anterior-posterior axis. The protein is Homeobox protein Hox-C13a (hoxc13a) of Takifugu rubripes (Japanese pufferfish).